The following is a 259-amino-acid chain: Deoxyribose-phosphate aldolase (259 aa).

Asp102 functions as the Proton donor/acceptor in the catalytic mechanism. The Schiff-base intermediate with acetaldehyde role is filled by Lys167. Lys201 functions as the Proton donor/acceptor in the catalytic mechanism.

This sequence belongs to the DeoC/FbaB aldolase family. DeoC type 2 subfamily.

It localises to the cytoplasm. The enzyme catalyses 2-deoxy-D-ribose 5-phosphate = D-glyceraldehyde 3-phosphate + acetaldehyde. It functions in the pathway carbohydrate degradation; 2-deoxy-D-ribose 1-phosphate degradation; D-glyceraldehyde 3-phosphate and acetaldehyde from 2-deoxy-alpha-D-ribose 1-phosphate: step 2/2. Its function is as follows. Catalyzes a reversible aldol reaction between acetaldehyde and D-glyceraldehyde 3-phosphate to generate 2-deoxy-D-ribose 5-phosphate. This chain is Deoxyribose-phosphate aldolase, found in Escherichia coli O8 (strain IAI1).